A 111-amino-acid polypeptide reads, in one-letter code: Ig kappa chain V-III region PC 6684 (111 aa).

Residues 1 to 23 (DIVLTQSPASLAVSLGQRATISC) are framework-1. A disulfide bridge connects residues Cys-23 and Cys-92. Positions 24-38 (RASKSVSTSGYSYMH) are complementarity-determining-1. A framework-2 region spans residues 39–53 (WYQQKPGQPPKLLIY). The interval 54-60 (LASNLES) is complementarity-determining-2. The framework-3 stretch occupies residues 61-92 (GVPARFSGSGSGTDFTLNIHPVEEEDAATYYC). Positions 93–101 (QHSRELPRT) are complementarity-determining-3. The segment at 102-111 (FGGGTKLEIK) is framework-4.

The chain is Ig kappa chain V-III region PC 6684 from Mus musculus (Mouse).